The primary structure comprises 576 residues: Citrinin biosynthesis transcriptional activator ctnR (576 aa).

Residues 1-27 are disordered; that stretch reads MLSHEMASTAHRQPSRPTTRQRQRTGR. The zn(2)-C6 fungal-type DNA-binding region spans 29-56; the sequence is CEECRRRKLRCDGQQPRCGVCVDSGVTC. A disordered region spans residues 102 to 148; it reads STPLTNDHHDGCSVSSASSRSDSNPPPTVSEPDMSLPNTTTSVSSAP. Low complexity predominate over residues 114 to 124; it reads SVSSASSRSDS. Residues 137-148 are compositionally biased toward polar residues; sequence LPNTTTSVSSAP.

The protein localises to the nucleus. Its function is as follows. Transcription factor that regulates the expression of the gene cluster that mediates the biosynthesis of the mycotoxin citrinin, a hepato-nephrotoxic compound to humans due to inhibition of respiration complex III. The polypeptide is Citrinin biosynthesis transcriptional activator ctnR (Monascus purpureus (Red mold)).